The primary structure comprises 555 residues: CTP synthase (555 aa).

Positions 1–272 (MQPTSTTTKH…DAYVVRKLDL (272 aa)) are amidoligase domain. S19 provides a ligand contact to CTP. Position 19 (S19) interacts with UTP. ATP is bound by residues 20-25 (SLGKGL) and D77. Mg(2+) contacts are provided by D77 and E146. Residues 153-155 (DIE), 193-198 (KTKPTQ), and K229 contribute to the CTP site. UTP contacts are provided by residues 193–198 (KTKPTQ) and K229. A Glutamine amidotransferase type-1 domain is found at 297–548 (TVALVGKYID…VKAAVARQVA (252 aa)). Residue G360 participates in L-glutamine binding. Residue C387 is the Nucleophile; for glutamine hydrolysis of the active site. Residues 388–391 (LGLQ), E411, and R473 each bind L-glutamine. Catalysis depends on residues H521 and E523.

This sequence belongs to the CTP synthase family. Homotetramer.

It catalyses the reaction UTP + L-glutamine + ATP + H2O = CTP + L-glutamate + ADP + phosphate + 2 H(+). The catalysed reaction is L-glutamine + H2O = L-glutamate + NH4(+). The enzyme catalyses UTP + NH4(+) + ATP = CTP + ADP + phosphate + 2 H(+). It participates in pyrimidine metabolism; CTP biosynthesis via de novo pathway; CTP from UDP: step 2/2. Allosterically activated by GTP, when glutamine is the substrate; GTP has no effect on the reaction when ammonia is the substrate. The allosteric effector GTP functions by stabilizing the protein conformation that binds the tetrahedral intermediate(s) formed during glutamine hydrolysis. Inhibited by the product CTP, via allosteric rather than competitive inhibition. Catalyzes the ATP-dependent amination of UTP to CTP with either L-glutamine or ammonia as the source of nitrogen. Regulates intracellular CTP levels through interactions with the four ribonucleotide triphosphates. This Streptomyces griseus subsp. griseus (strain JCM 4626 / CBS 651.72 / NBRC 13350 / KCC S-0626 / ISP 5235) protein is CTP synthase.